The following is a 501-amino-acid chain: Lysine--tRNA ligase (501 aa).

Glu402 and Glu409 together coordinate Mg(2+).

The protein belongs to the class-II aminoacyl-tRNA synthetase family. Homodimer. Requires Mg(2+) as cofactor.

Its subcellular location is the cytoplasm. The catalysed reaction is tRNA(Lys) + L-lysine + ATP = L-lysyl-tRNA(Lys) + AMP + diphosphate. The polypeptide is Lysine--tRNA ligase (Helicobacter pylori (strain Shi470)).